The following is a 315-amino-acid chain: Porphobilinogen deaminase (315 aa).

An S-(dipyrrolylmethanemethyl)cysteine modification is found at cysteine 245.

This sequence belongs to the HMBS family. Monomer. It depends on dipyrromethane as a cofactor.

The catalysed reaction is 4 porphobilinogen + H2O = hydroxymethylbilane + 4 NH4(+). Its pathway is porphyrin-containing compound metabolism; protoporphyrin-IX biosynthesis; coproporphyrinogen-III from 5-aminolevulinate: step 2/4. It functions in the pathway porphyrin-containing compound metabolism; chlorophyll biosynthesis. In terms of biological role, tetrapolymerization of the monopyrrole PBG into the hydroxymethylbilane pre-uroporphyrinogen in several discrete steps. This Prochlorococcus marinus (strain NATL1A) protein is Porphobilinogen deaminase.